Here is a 409-residue protein sequence, read N- to C-terminus: Putative competence-damage inducible protein (409 aa).

This sequence belongs to the CinA family.

The polypeptide is Putative competence-damage inducible protein (Clostridium botulinum (strain Kyoto / Type A2)).